The sequence spans 170 residues: Cathelicidin antimicrobial peptide (170 aa).

Residues 1–30 (MKTQRDGPSLGRWSLLLLLLGLTMPLAVIG) form the signal peptide. Residues 31 to 131 (RVLSYQEAVL…DISCDKDKRK (101 aa)) constitute a propeptide, cathelin-like domain (CLD). The cathelin-like domain (CLD) stretch occupies residues 31–131 (RVLSYQEAVL…DISCDKDKRK (101 aa)). 2 disulfides stabilise this stretch: Cys-86–Cys-97 and Cys-108–Cys-125. Residues 150-162 (LKKIGQKIKDFFG) form an active core region.

This sequence belongs to the cathelicidin family. As to quaternary structure, monomer, homodimer or homotrimer (in vitro). Oligomerizes as tetra- or hexamer in solution (in vitro). In terms of processing, proteolytically cleaved by proteinase PRTN3 into antibacterial peptide LL-37. Proteolytically cleaved by cathepsin CTSG and neutrophil elastase ELANE. Post-translationally, resistant to proteolytic degradation in solution, and when bound to both zwitterionic (mimicking mammalian membranes) and negatively charged membranes (mimicking bacterial membranes). After secretion onto the skin surface, the CAMP gene product is processed by a serine protease-dependent mechanism into multiple novel antimicrobial peptides distinct from and shorter than cathelicidin LL-37. These peptides show enhanced antimicrobial action, acquiring the ability to kill skin pathogens such as S.aureus, E.coli and C.albicans. These peptides have lost the ability to stimulate CXCL8/IL8 release from keratinocytes. The peptides act synergistically, killing bacteria at lower concentrations when present together, and maintain activity at increased salt condition.

It localises to the secreted. Its subcellular location is the vesicle. Antimicrobial protein that is an integral component of the innate immune system. Binds to bacterial lipopolysaccharides (LPS). Acts via neutrophil N-formyl peptide receptors to enhance the release of CXCL2. Postsecretory processing generates multiple cathelicidin antimicrobial peptides with various lengths which act as a topical antimicrobial defense in sweat on skin. The unprocessed precursor form, cathelicidin antimicrobial peptide, inhibits the growth of Gram-negative E.coli and E.aerogenes with efficiencies comparable to that of the mature peptide LL-37 (in vitro). Functionally, antimicrobial peptide that is an integral component of the innate immune system. Binds to bacterial lipopolysaccharides (LPS). Causes membrane permeabilization by forming transmembrane pores (in vitro). Causes lysis of E.coli. Exhibits antimicrobial activity against Gram-negative bacteria such as P.aeruginosa, S.typhimurium, E.aerogenes, E.coli and P.syringae, Gram-positive bacteria such as L.monocytogenes, S.epidermidis, S.pyogenes and S.aureus, as well as vancomycin-resistant enterococci (in vitro). Exhibits antimicrobial activity against methicillin-resistant S.aureus, P.mirabilis, and C.albicans in low-salt media, but not in media containing 100 mM NaCl (in vitro). Forms chiral supramolecular assemblies with quinolone signal (PQS) molecules of P.aeruginosa, which may lead to interference of bacterial quorum signaling and perturbance of bacterial biofilm formation. May form supramolecular fiber-like assemblies on bacterial membranes. Induces cytokine and chemokine producation as well as TNF/TNFA and CSF2/GMCSF production in normal human keratinocytes. Exhibits hemolytic activity against red blood cells. Its function is as follows. Exhibits antimicrobial activity against E.coli and B.megaterium (in vitro). The polypeptide is Cathelicidin antimicrobial peptide (Saguinus oedipus (Cotton-top tamarin)).